The sequence spans 869 residues: DNA mismatch repair protein MutS (869 aa).

Residue 618–625 (GPNMGGKS) participates in ATP binding.

It belongs to the DNA mismatch repair MutS family.

In terms of biological role, this protein is involved in the repair of mismatches in DNA. It is possible that it carries out the mismatch recognition step. This protein has a weak ATPase activity. The polypeptide is DNA mismatch repair protein MutS (Zymomonas mobilis subsp. mobilis (strain ATCC 31821 / ZM4 / CP4)).